The chain runs to 62 residues: Conorfamide-Tx1 (62 aa).

The first 19 residues, 1–19 (MSGRGFLLLALLLLVTVEA), serve as a signal peptide directing secretion. A propeptide spanning residues 20 to 26 (TKVEKNK) is cleaved from the precursor. At Tyr46 the chain carries Tyrosine amide. Positions 47–62 (GRRDMQSPLLSERLRF) are excised as a propeptide.

Belongs to the FARP (FMRFamide related peptide) family. Expressed by the venom duct.

The protein resides in the secreted. This peptide does not show activity on human and mouse sensory neuron-specific G-protein coupled receptors MRGPRX1. In Conus textile (Cloth-of-gold cone), this protein is Conorfamide-Tx1.